We begin with the raw amino-acid sequence, 42 residues long: Photosystem I reaction center subunit IX (42 aa).

A helical membrane pass occupies residues 7–27 (FLSTAPVLIMALLTVTAGILI).

This sequence belongs to the PsaJ family.

It is found in the cellular thylakoid membrane. In terms of biological role, may help in the organization of the PsaE and PsaF subunits. This chain is Photosystem I reaction center subunit IX, found in Crocosphaera subtropica (strain ATCC 51142 / BH68) (Cyanothece sp. (strain ATCC 51142)).